Here is a 314-residue protein sequence, read N- to C-terminus: 2,3-dihydroxyphenylpropionate/2,3-dihydroxicinnamic acid 1,2-dioxygenase (314 aa).

H115 serves as the catalytic Proton donor. H179 (proton acceptor) is an active-site residue.

Belongs to the LigB/MhpB extradiol dioxygenase family. In terms of assembly, homotetramer. It depends on Fe(2+) as a cofactor.

It carries out the reaction 3-(2,3-dihydroxyphenyl)propanoate + O2 = (2Z,4E)-2-hydroxy-6-oxonona-2,4-dienedioate + H(+). It catalyses the reaction (2E)-3-(2,3-dihydroxyphenyl)prop-2-enoate + O2 = (2Z,4E,7E)-2-hydroxy-6-oxonona-2,4,7-trienedioate + H(+). It participates in aromatic compound metabolism; 3-phenylpropanoate degradation. Functionally, catalyzes the non-heme iron(II)-dependent oxidative cleavage of 2,3-dihydroxyphenylpropionic acid and 2,3-dihydroxicinnamic acid into 2-hydroxy-6-ketononadienedioate and 2-hydroxy-6-ketononatrienedioate, respectively. The protein is 2,3-dihydroxyphenylpropionate/2,3-dihydroxicinnamic acid 1,2-dioxygenase of Escherichia coli O139:H28 (strain E24377A / ETEC).